The sequence spans 1108 residues: Activity-dependent neuroprotector homeobox protein (1108 aa).

A binds to beta-catenin/CTNNB1 region spans residues 1 to 685 (MFQLPVNNLG…ASTITLHLVH (685 aa)). Glycyl lysine isopeptide (Lys-Gly) (interchain with G-Cter in SUMO2) cross-links involve residues K39 and K72. The C2H2-type 1; degenerate zinc-finger motif lies at 74–97 (FCCSACPFSSKFFSAYKSHFRNVH). At S98 the chain carries Phosphoserine. Residues 107 to 129 (LNCPYCTFNADKKTLETHIKIFH) form a C2H2-type 2; degenerate zinc finger. The tract at residues 133-154 (SSAPSSSLSTFKDKNKNDGLKP) is disordered. Positions 143–154 (FKDKNKNDGLKP) are enriched in basic and acidic residues. Glycyl lysine isopeptide (Lys-Gly) (interchain with G-Cter in SUMO2) cross-links involve residues K144 and K155. Residues 165–188 (YYCKKCTYRDPLYEIVRKHIYREH) form a C2H2-type 3; degenerate zinc finger. Residues K203, K231, K266, K274, K278, K279, K311, and K335 each participate in a glycyl lysine isopeptide (Lys-Gly) (interchain with G-Cter in SUMO2) cross-link. The C2H2-type 4; degenerate zinc finger occupies 221-244 (IHCKRCLFMPKSYEALVQHVIEDH). R348 carries the asymmetric dimethylarginine modification. A neuroprotective peptide; contributes to CTNNB1-binding, but less effective than whole N-terminal region region spans residues 354–361 (NAPVSIPQ). A disordered region spans residues 360-438 (PQQSQSVKQL…PAATGPPPSN (79 aa)). Residues K367 and K407 each participate in a glycyl lysine isopeptide (Lys-Gly) (interchain with G-Cter in SUMO2) cross-link. A compositionally biased stretch (polar residues) spans 393–422 (SLQTANTSLPPGQVKSPSVSQSQASRVLGQ). Phosphoserine is present on residues S408 and S412. Residue K426 forms a Glycyl lysine isopeptide (Lys-Gly) (interchain with G-Cter in SUMO2) linkage. Over residues 426 to 437 (KPPPAATGPPPS) the composition is skewed to pro residues. A C2H2-type 5; atypical zinc finger spans residues 446-468 (KICTICNELFPENVYSVHFEKEH). 2 consecutive C2H2-type zinc fingers follow at residues 488–509 (SKCL…MLIH) and 511–534 (LSCP…RMVH). Glycyl lysine isopeptide (Lys-Gly) (interchain with G-Cter in SUMO2) cross-links involve residues K599 and K605. Phosphoserine is present on S607. Glycyl lysine isopeptide (Lys-Gly) (interchain with G-Cter in SUMO2) cross-links involve residues K615, K620, K631, and K657. The C2H2-type 8; atypical zinc-finger motif lies at 621–646 (TLCPLCFSILKGPISDALAHHLRERH). The segment at 661–685 (YKCIHCLGVYTSNMTASTITLHLVH) adopts a C2H2-type 9; atypical zinc-finger fold. Positions 690–711 (GKTQNGQDKTNAPSRLNQSPGL) are disordered. Polar residues predominate over residues 691–709 (KTQNGQDKTNAPSRLNQSP). K698 is covalently cross-linked (Glycyl lysine isopeptide (Lys-Gly) (interchain with G-Cter in SUMO2)). Residue S708 is modified to Phosphoserine. Residues K715, K727, and K730 each participate in a glycyl lysine isopeptide (Lys-Gly) (interchain with G-Cter in SUMO2) cross-link. S737 is subject to Phosphoserine. K744 participates in a covalent cross-link: Glycyl lysine isopeptide (Lys-Gly) (interchain with G-Cter in SUMO2). The homeobox DNA-binding region spans 753–813 (LDPKGHEDDS…SNKRKKCVRD (61 aa)). S804 bears the Phosphoserine mark. Residues K806, K828, and K834 each participate in a glycyl lysine isopeptide (Lys-Gly) (interchain with G-Cter in SUMO2) cross-link. Basic and acidic residues predominate over residues 851 to 880 (KDSRVNASKTVDKKHNLGKEDDSFSDSFEH). The tract at residues 851 to 1037 (KDSRVNASKT…DTEQLKWKNS (187 aa)) is disordered. A phosphoserine mark is found at S875, S877, S885, S888, and S904. Glycyl lysine isopeptide (Lys-Gly) (interchain with G-Cter in SUMO2) cross-links involve residues K913, K928, and K941. Over residues 928–938 (KEEEEEEEEED) the composition is skewed to acidic residues. Basic and acidic residues predominate over residues 939–959 (GSKYETIHLTEEPAKLMHDAS). 2 positions are modified to phosphoserine: S959 and S961. A compositionally biased stretch (polar residues) spans 977–988 (PSESGPGSQQIS). K1022 is covalently cross-linked (Glycyl lysine isopeptide (Lys-Gly) (interchain with G-Cter in SUMO2)). Residues K1041 and K1048 each carry the N6-acetyllysine; alternate modification. Residues K1041 and K1048 each participate in a glycyl lysine isopeptide (Lys-Gly) (interchain with G-Cter in SUMO2); alternate cross-link. The segment at 1050–1108 (QSQWENASENAERLPNPQIEWQNSTIDSEDGEQFDSMTDGVADPMHGSLTGVKLSSQQA) is disordered. At S1077 the chain carries Phosphoserine.

Interacts (via N-terminal region) with beta-catenin/CTNNB1 (via the central armadillo domains); interaction is direct and stabilizes CTNNB1 by modulating its phosphorylation by glycogen synthase kinase-3 beta GSK3B. As to expression, expressed in the brain, with a higher expression in cerebellum and hippocampus. Weakly expressed in lung, kidney and intestine, and expressed at intermediate level in testis.

The protein localises to the nucleus. It localises to the chromosome. Functionally, may be involved in transcriptional regulation. May mediate some of the neuroprotective peptide VIP-associated effects involving normal growth and cancer proliferation. Positively modulates WNT-beta-catenin/CTNN1B signaling, acting by regulating phosphorylation of, and thereby stabilizing, CTNNB1. May be required for neural induction and neuronal differentiation. May be involved in erythroid differentiation. In Mus musculus (Mouse), this protein is Activity-dependent neuroprotector homeobox protein (Adnp).